A 356-amino-acid chain; its full sequence is Phosphoribosylformylglycinamidine cyclo-ligase (356 aa).

This sequence belongs to the AIR synthase family.

It is found in the cytoplasm. The enzyme catalyses 2-formamido-N(1)-(5-O-phospho-beta-D-ribosyl)acetamidine + ATP = 5-amino-1-(5-phospho-beta-D-ribosyl)imidazole + ADP + phosphate + H(+). It functions in the pathway purine metabolism; IMP biosynthesis via de novo pathway; 5-amino-1-(5-phospho-D-ribosyl)imidazole from N(2)-formyl-N(1)-(5-phospho-D-ribosyl)glycinamide: step 2/2. The sequence is that of Phosphoribosylformylglycinamidine cyclo-ligase from Nitrobacter hamburgensis (strain DSM 10229 / NCIMB 13809 / X14).